Here is a 263-residue protein sequence, read N- to C-terminus: Small ribosomal subunit protein eS4 (263 aa).

One can recognise an S4 RNA-binding domain in the interval 42–104; that stretch reads LPLIIFLRNK…TGENFRLIYD (63 aa). Lysine 230 is covalently cross-linked (Glycyl lysine isopeptide (Lys-Gly) (interchain with G-Cter in SUMO2)). Lysine 233 carries the post-translational modification N6-acetyllysine.

Belongs to the eukaryotic ribosomal protein eS4 family. As to quaternary structure, component of the small ribosomal subunit. Part of the small subunit (SSU) processome, composed of more than 70 proteins and the RNA chaperone small nucleolar RNA (snoRNA) U3. Identified in a IGF2BP1-dependent mRNP granule complex containing untranslated mRNAs.

It localises to the cytoplasm. It is found in the nucleus. Its subcellular location is the nucleolus. Its function is as follows. Component of the small ribosomal subunit. The ribosome is a large ribonucleoprotein complex responsible for the synthesis of proteins in the cell. Part of the small subunit (SSU) processome, first precursor of the small eukaryotic ribosomal subunit. During the assembly of the SSU processome in the nucleolus, many ribosome biogenesis factors, an RNA chaperone and ribosomal proteins associate with the nascent pre-rRNA and work in concert to generate RNA folding, modifications, rearrangements and cleavage as well as targeted degradation of pre-ribosomal RNA by the RNA exosome. In Oryctolagus cuniculus (Rabbit), this protein is Small ribosomal subunit protein eS4 (RPS4X).